A 424-amino-acid polypeptide reads, in one-letter code: Elongation factor 1-alpha (424 aa).

In terms of domain architecture, tr-type G spans 5-223 (KPHLNLITIG…DAFKVPEKPI (219 aa)). Residues 14 to 21 (GHVDHGKS) form a G1 region. 14 to 21 (GHVDHGKS) provides a ligand contact to GTP. Residue Ser-21 participates in Mg(2+) binding. Residues 70-74 (GVTID) form a G2 region. The segment at 91-94 (DAPG) is G3. GTP contacts are provided by residues 91–95 (DAPGH) and 148–151 (NKMD). The tract at residues 148–151 (NKMD) is G4. The interval 187-189 (SGY) is G5.

It belongs to the TRAFAC class translation factor GTPase superfamily. Classic translation factor GTPase family. EF-Tu/EF-1A subfamily.

Its subcellular location is the cytoplasm. The enzyme catalyses GTP + H2O = GDP + phosphate + H(+). Its function is as follows. GTP hydrolase that promotes the GTP-dependent binding of aminoacyl-tRNA to the A-site of ribosomes during protein biosynthesis. The sequence is that of Elongation factor 1-alpha from Thermoplasma volcanium (strain ATCC 51530 / DSM 4299 / JCM 9571 / NBRC 15438 / GSS1).